We begin with the raw amino-acid sequence, 341 residues long: Methionine import ATP-binding protein MetN (341 aa).

Positions 9-247 (ISVEQLNKEI…PQSAITEELF (239 aa)) constitute an ABC transporter domain. 41-48 (GHSGSGKS) contacts ATP.

The protein belongs to the ABC transporter superfamily. Methionine importer (TC 3.A.1.24) family. In terms of assembly, the complex is composed of two ATP-binding proteins (MetN), two transmembrane proteins (MetI) and a solute-binding protein (MetQ).

The protein resides in the cell inner membrane. The catalysed reaction is L-methionine(out) + ATP + H2O = L-methionine(in) + ADP + phosphate + H(+). It catalyses the reaction D-methionine(out) + ATP + H2O = D-methionine(in) + ADP + phosphate + H(+). Its function is as follows. Part of the ABC transporter complex MetNIQ involved in methionine import. Responsible for energy coupling to the transport system. The polypeptide is Methionine import ATP-binding protein MetN (Chlamydia abortus (strain DSM 27085 / S26/3) (Chlamydophila abortus)).